Reading from the N-terminus, the 138-residue chain is ATP synthase epsilon chain (138 aa).

This sequence belongs to the ATPase epsilon chain family. F-type ATPases have 2 components, CF(1) - the catalytic core - and CF(0) - the membrane proton channel. CF(1) has five subunits: alpha(3), beta(3), gamma(1), delta(1), epsilon(1). CF(0) has three main subunits: a, b and c.

Its subcellular location is the cell membrane. Produces ATP from ADP in the presence of a proton gradient across the membrane. The sequence is that of ATP synthase epsilon chain (atpC) from Buchnera aphidicola subsp. Acyrthosiphon pisum (strain APS) (Acyrthosiphon pisum symbiotic bacterium).